We begin with the raw amino-acid sequence, 259 residues long: BTB/POZ domain-containing protein KCTD4 (259 aa).

The disordered stretch occupies residues 1-25 (MERKINRREKEKEYEGKHNSLEDTD). The BTB domain occupies 33 to 134 (TLMTLNVGGY…EVKSRWEKEQ (102 aa)).

The chain is BTB/POZ domain-containing protein KCTD4 (KCTD4) from Homo sapiens (Human).